The chain runs to 365 residues: Glycerol dehydrogenase (365 aa).

The NAD(+) site is built by aspartate 37, glycine 94, lysine 95, threonine 116, and serine 119. Aspartate 121 is a glycerol binding site. The NAD(+) site is built by serine 125, leucine 127, and tyrosine 131. Mn(2+)-binding residues include aspartate 171, histidine 254, and histidine 271. Histidine 254 provides a ligand contact to glycerol.

Belongs to the iron-containing alcohol dehydrogenase family. As to quaternary structure, homohexamer. Mn(2+) is required as a cofactor.

It carries out the reaction glycerol + NAD(+) = dihydroxyacetone + NADH + H(+). It catalyses the reaction hydroxyacetone + NADH + H(+) = (S)-propane-1,2-diol + NAD(+). It participates in polyol metabolism; glycerol fermentation; glycerone phosphate from glycerol (oxidative route): step 1/2. Its activity is regulated as follows. Inhibited by zinc. Catalyzes the NAD-dependent oxidation of glycerol to dihydroxyacetone (glycerone). Allows microorganisms to utilize glycerol as a source of carbon under anaerobic conditions. Exhibits a rather broad substrate specificity since it can also oxidize 1,2-propanediol and 2,3-butanediol and reduce dihydroxyacetone. Cannot use NADP(+) as an electron acceptor for the oxidation of glycerol. This is Glycerol dehydrogenase from Citrobacter freundii.